The chain runs to 740 residues: MPLAQLADPWQKMAVESPSDSAENGQQIMDEPMGEEEINPQTEEGSIKEIAITHHVKEGHEKADPSQFELLKVLGQGSFGKVFLVKKISGSDARQLYAMKVLKKATLKVRDRVRTKMERDILVEVNHPFIVKLHYAFQTEGKLYLILDFLRGGDLFTRLSKEVMFTEEDVKFYLAELALALDHLHSLGIIYRDLKPENILLDEEGHIKLTDFGLSKESIDHEKKAYSFCGTVEYMAPEVVNRRGHTQSADWWSFGVLMFEMLTGTLPFQGKDRKETMTMILKAKLGMPQFLSPEAQSLLRMLFKRNPANRLGAGPDGVEEIKRHSFFSTIDWNKLYRREIHPPFKPATGRPEDTFYFDPEFTAKTPKDSPGIPPSANAHQLFRGFSFVAITSDDESQAMQTVGVHSIVQQLHRNSIQFTDGYEVKEDIGVGSYSVCKRCIHKATNMEFAVKIIDKSKRDPTEEIEILLRYGQHPNIITLKDVYDDGKYVYVVTELMKGGELLDKILRQKFFSEREASAVLFTITKTVEYLHAQGVVHRDLKPSNILYVDESGNPESIRICDFGFAKQLRAENGLLMTPCYTANFVAPEVLKRQGYDAACDIWSLGVLLYTMLTGYTPFANGPDDTPEEILARIGSGKFSLSGGYWNSVSDTAKDLVSKMLHVDPHQRLTAALVLRHPWIVHWDQLPQYQLNRQDAPHLVKGAMAATYSALNRNQSPVLEPVGRSTLAQRRGIKKITSTAL.

A disordered region spans residues 1–26 (MPLAQLADPWQKMAVESPSDSAENGQ). The Protein kinase 1 domain occupies 68 to 327 (FELLKVLGQG…VEEIKRHSFF (260 aa)). ATP contacts are provided by residues 74-82 (LGQGSFGKV) and Lys100. Asp193 (proton acceptor) is an active-site residue. Ser227 is modified (phosphoserine; by PDPK1). One can recognise an AGC-kinase C-terminal domain in the interval 328–397 (STIDWNKLYR…VAITSDDESQ (70 aa)). Thr365 bears the Phosphothreonine mark. Residues Ser369 and Ser375 each carry the phosphoserine modification. At Ser386 the chain carries Phosphoserine; by autocatalysis and MAPKAPK2. Phosphoserine is present on Ser415. A Protein kinase 2 domain is found at 422-679 (YEVKEDIGVG…AALVLRHPWI (258 aa)). ATP-binding positions include 428-436 (IGVGSYSVC) and Lys451. The residue at position 529 (Tyr529) is a Phosphotyrosine; by FGFR3. Catalysis depends on Asp539, which acts as the Proton acceptor. Phosphoserine is present on residues Ser556 and Ser715.

Belongs to the protein kinase superfamily. AGC Ser/Thr protein kinase family. S6 kinase subfamily. In terms of assembly, forms a complex with either MAPK1/ERK2 or MAPK3/ERK1 in quiescent cells. Transiently dissociates following mitogenic stimulation. Interacts with NFATC4, ETV1/ER81 and FGFR1. Mg(2+) serves as cofactor. Post-translationally, activated by phosphorylation at Ser-227 by PDPK1. Autophosphorylated on Ser-386, as part of the activation process. May be phosphorylated at Thr-365 and Ser-369 by MAPK1/ERK2 and MAPK3/ERK1. Can also be activated via phosphorylation at Ser-386 by MAPKAPK2. In terms of processing, N-terminal myristoylation results in an activated kinase in the absence of added growth factors. As to expression, intestine, thymus, lung, heart and brain.

It is found in the nucleus. It localises to the cytoplasm. It carries out the reaction L-seryl-[protein] + ATP = O-phospho-L-seryl-[protein] + ADP + H(+). The catalysed reaction is L-threonyl-[protein] + ATP = O-phospho-L-threonyl-[protein] + ADP + H(+). With respect to regulation, upon extracellular signal or mitogen stimulation, phosphorylated at Thr-577 in the C-terminal kinase domain (CTKD) by MAPK1/ERK2 and MAPK3/ERK1. The activated CTKD then autophosphorylates Ser-386, allowing binding of PDPK1, which in turn phosphorylates Ser-227 in the N-terminal kinase domain (NTDK) leading to the full activation of the protein and subsequent phosphorylation of the substrates by the NTKD. Functionally, serine/threonine-protein kinase that acts downstream of ERK (MAPK1/ERK2 and MAPK3/ERK1) signaling and mediates mitogenic and stress-induced activation of the transcription factors CREB1, ETV1/ER81 and NR4A1/NUR77, regulates translation through RPS6 and EIF4B phosphorylation, and mediates cellular proliferation, survival, and differentiation by modulating mTOR signaling and repressing pro-apoptotic function of BAD and DAPK1. In fibroblast, is required for EGF-stimulated phosphorylation of CREB1 and histone H3 at 'Ser-10', which results in the subsequent transcriptional activation of several immediate-early genes. In response to mitogenic stimulation (EGF and PMA), phosphorylates and activates NR4A1/NUR77 and ETV1/ER81 transcription factors and the cofactor CREBBP. Upon insulin-derived signal, acts indirectly on the transcription regulation of several genes by phosphorylating GSK3B at 'Ser-9' and inhibiting its activity. Phosphorylates RPS6 in response to serum or EGF via an mTOR-independent mechanism and promotes translation initiation by facilitating assembly of the preinitiation complex. In response to insulin, phosphorylates EIF4B, enhancing EIF4B affinity for the EIF3 complex and stimulating cap-dependent translation. Is involved in the mTOR nutrient-sensing pathway by directly phosphorylating TSC2 at 'Ser-1798', which potently inhibits TSC2 ability to suppress mTOR signaling, and mediates phosphorylation of RPTOR, which regulates mTORC1 activity and may promote rapamycin-sensitive signaling independently of the PI3K/AKT pathway. Mediates cell survival by phosphorylating the pro-apoptotic proteins BAD and DAPK1 and suppressing their pro-apoptotic function. Promotes the survival of hepatic stellate cells by phosphorylating CEBPB in response to the hepatotoxin carbon tetrachloride (CCl4). Is involved in cell cycle regulation by phosphorylating the CDK inhibitor CDKN1B, which promotes CDKN1B association with 14-3-3 proteins and prevents its translocation to the nucleus and inhibition of G1 progression. In LPS-stimulated dendritic cells, is involved in TLR4-induced macropinocytosis, and in myeloma cells, acts as effector of FGFR3-mediated transformation signaling, after direct phosphorylation at Tyr-529 by FGFR3. Negatively regulates EGF-induced MAPK1/3 phosphorylation via phosphorylation of SOS1. Phosphorylates SOS1 at 'Ser-1134' and 'Ser-1161' that create YWHAB and YWHAE binding sites and which contribute to the negative regulation of MAPK1/3 phosphorylation. Phosphorylates EPHA2 at 'Ser-897', the RPS6KA-EPHA2 signaling pathway controls cell migration. Acts as a regulator of osteoblast differentiation by mediating phosphorylation of ATF4, thereby promoting ATF4 transactivation activity. The polypeptide is Ribosomal protein S6 kinase alpha-3 (Rps6ka3) (Mus musculus (Mouse)).